The following is a 585-amino-acid chain: Glutamine--tRNA ligase (585 aa).

Residues 51–61 (PEPNGYLHIGH) carry the 'HIGH' region motif. ATP-binding positions include 52 to 54 (EPN) and 58 to 64 (HIGHAKS). Aspartate 84 and tyrosine 238 together coordinate L-glutamine. ATP is bound by residues threonine 257 and 292-293 (RL). The 'KMSKS' region signature appears at 299 to 303 (ITSKR).

This sequence belongs to the class-I aminoacyl-tRNA synthetase family. Monomer.

Its subcellular location is the cytoplasm. It catalyses the reaction tRNA(Gln) + L-glutamine + ATP = L-glutaminyl-tRNA(Gln) + AMP + diphosphate. The protein is Glutamine--tRNA ligase of Cupriavidus necator (strain ATCC 17699 / DSM 428 / KCTC 22496 / NCIMB 10442 / H16 / Stanier 337) (Ralstonia eutropha).